The sequence spans 131 residues: Holo-[acyl-carrier-protein] synthase (131 aa).

Residues D8 and E59 each contribute to the Mg(2+) site.

Belongs to the P-Pant transferase superfamily. AcpS family. Mg(2+) is required as a cofactor.

The protein resides in the cytoplasm. The catalysed reaction is apo-[ACP] + CoA = holo-[ACP] + adenosine 3',5'-bisphosphate + H(+). Functionally, transfers the 4'-phosphopantetheine moiety from coenzyme A to a Ser of acyl-carrier-protein. This Rickettsia rickettsii (strain Sheila Smith) protein is Holo-[acyl-carrier-protein] synthase.